The sequence spans 300 residues: N-acetylmannosamine kinase (300 aa).

ATP contacts are provided by residues 5–12 (ALDIGGTK) and 132–139 (GVGGGIVL). The Zn(2+) site is built by His156, Cys166, Cys168, and Cys173.

It belongs to the ROK (NagC/XylR) family. NanK subfamily. In terms of assembly, homodimer.

It carries out the reaction an N-acyl-D-mannosamine + ATP = an N-acyl-D-mannosamine 6-phosphate + ADP + H(+). The protein operates within amino-sugar metabolism; N-acetylneuraminate degradation; D-fructose 6-phosphate from N-acetylneuraminate: step 2/5. Functionally, catalyzes the phosphorylation of N-acetylmannosamine (ManNAc) to ManNAc-6-P. This chain is N-acetylmannosamine kinase, found in Haemophilus influenzae (strain PittEE).